The chain runs to 168 residues: UPF0478 protein SH1183 (168 aa).

A helical transmembrane segment spans residues 7–27 (IAGIIAAIAFLVLCIGIVVVL). The interval 144-168 (YRNTSVGNDANHSNENYTTNVEKNF) is disordered.

Belongs to the UPF0478 family.

It localises to the cell membrane. This Staphylococcus haemolyticus (strain JCSC1435) protein is UPF0478 protein SH1183.